Here is a 288-residue protein sequence, read N- to C-terminus: Hypersensitive-induced response protein-like protein 1 (288 aa).

The N-myristoyl glycine moiety is linked to residue G2.

Its function is as follows. Positive regulator of hypersensitive response (HR)-like cell death. May be involved in potassium ion channel regulation. This Oryza sativa subsp. japonica (Rice) protein is Hypersensitive-induced response protein-like protein 1.